The chain runs to 367 residues: Phosphoribosylaminoimidazole-succinocarboxamide synthase (367 aa).

This sequence belongs to the SAICAR synthetase family.

It catalyses the reaction 5-amino-1-(5-phospho-D-ribosyl)imidazole-4-carboxylate + L-aspartate + ATP = (2S)-2-[5-amino-1-(5-phospho-beta-D-ribosyl)imidazole-4-carboxamido]succinate + ADP + phosphate + 2 H(+). It functions in the pathway purine metabolism; IMP biosynthesis via de novo pathway; 5-amino-1-(5-phospho-D-ribosyl)imidazole-4-carboxamide from 5-amino-1-(5-phospho-D-ribosyl)imidazole-4-carboxylate: step 1/2. This Shewanella sp. (strain W3-18-1) protein is Phosphoribosylaminoimidazole-succinocarboxamide synthase.